An 81-amino-acid polypeptide reads, in one-letter code: Photosystem I iron-sulfur center (81 aa).

4Fe-4S ferredoxin-type domains lie at 2–31 (SHSV…MVPW) and 37–68 (GQIA…IRVY). Cysteine 11, cysteine 14, cysteine 17, cysteine 21, cysteine 48, cysteine 51, cysteine 54, and cysteine 58 together coordinate [4Fe-4S] cluster.

In terms of assembly, the cyanobacterial PSI reaction center is composed of one copy each of PsaA,B,C,D,E,F,I,J,K,L,M and X, and forms trimeric complexes. The cofactor is [4Fe-4S] cluster.

It is found in the cellular thylakoid membrane. It catalyses the reaction reduced [plastocyanin] + hnu + oxidized [2Fe-2S]-[ferredoxin] = oxidized [plastocyanin] + reduced [2Fe-2S]-[ferredoxin]. Functionally, apoprotein for the two 4Fe-4S centers FA and FB of photosystem I (PSI); essential for photochemical activity. FB is the terminal electron acceptor of PSI, donating electrons to ferredoxin. The C-terminus interacts with PsaA/B/D and helps assemble the protein into the PSI complex. Required for binding of PsaD and PsaE to PSI. PSI is a plastocyanin/cytochrome c6-ferredoxin oxidoreductase, converting photonic excitation into a charge separation, which transfers an electron from the donor P700 chlorophyll pair to the spectroscopically characterized acceptors A0, A1, FX, FA and FB in turn. Mutant proteins with a 3Fe-4S center are not observed bound to PSI in vitro, and are probably not able to do so in vivo. The polypeptide is Photosystem I iron-sulfur center (psaC) (Picosynechococcus sp. (strain ATCC 27264 / PCC 7002 / PR-6) (Agmenellum quadruplicatum)).